Here is a 513-residue protein sequence, read N- to C-terminus: GMP synthase [glutamine-hydrolyzing] (513 aa).

A Glutamine amidotransferase type-1 domain is found at 8–198; the sequence is MILVLDFGSQ…VFGVCDCEGK (191 aa). The active-site Nucleophile is Cys85. Residues His172 and Glu174 contribute to the active site. The GMPS ATP-PPase domain occupies 199–388; the sequence is WSMENFIEIE…LGLPDDIVWR (190 aa). An ATP-binding site is contributed by 226 to 232; sequence SGGVDSS.

Homodimer.

It catalyses the reaction XMP + L-glutamine + ATP + H2O = GMP + L-glutamate + AMP + diphosphate + 2 H(+). It functions in the pathway purine metabolism; GMP biosynthesis; GMP from XMP (L-Gln route): step 1/1. In terms of biological role, catalyzes the synthesis of GMP from XMP. The chain is GMP synthase [glutamine-hydrolyzing] from Bacillus velezensis (strain DSM 23117 / BGSC 10A6 / LMG 26770 / FZB42) (Bacillus amyloliquefaciens subsp. plantarum).